Consider the following 500-residue polypeptide: Putative beta-lactamase-like 1 (500 aa).

The protein belongs to the beta-lactamase family.

This Homo sapiens (Human) protein is Putative beta-lactamase-like 1 (LACTBL1).